A 256-amino-acid polypeptide reads, in one-letter code: 3-hydroxy-5-phosphonooxypentane-2,4-dione thiolase (256 aa).

Lys168 functions as the Schiff-base intermediate with substrate in the catalytic mechanism.

The protein belongs to the DeoC/FbaB aldolase family. In terms of assembly, homodecamer.

It is found in the cytoplasm. The enzyme catalyses dihydroxyacetone phosphate + acetyl-CoA = 3-hydroxy-2,4-dioxopentyl phosphate + CoA. Functionally, involved in the degradation of phospho-AI-2, thereby terminating induction of the lsr operon and closing the AI-2 signaling cycle. Catalyzes the transfer of an acetyl moiety from 3-hydroxy-5-phosphonooxypentane-2,4-dione to CoA to form glycerone phosphate and acetyl-CoA. This is 3-hydroxy-5-phosphonooxypentane-2,4-dione thiolase (lsrF) from Shigella flexneri serotype 5b (strain 8401).